A 587-amino-acid chain; its full sequence is Nucleoporin p58/p45 (587 aa).

A run of 5 repeats spans residues 7 to 8 (FG), 30 to 31 (FG), 44 to 45 (FG), 63 to 64 (FG), and 68 to 69 (FG). The tract at residues 7–567 (FGSGTLGSTT…VSNPASAGFG (561 aa)) is 14 X 2 AA repeats of F-G. The disordered stretch occupies residues 196-236 (TSAASNEGLGGIDFSTSSDKKSDKTGTRPEDSKALKDENLP). Basic and acidic residues predominate over residues 213 to 234 (SDKKSDKTGTRPEDSKALKDEN). 2 coiled-coil regions span residues 244–264 (ENLQ…SRMS) and 302–369 (ETAQ…SHIT). The residue at position 319 (T319) is a Phosphothreonine. A run of 9 repeats spans residues 476-477 (FG), 480-481 (FG), 501-502 (FG), 507-508 (FG), 517-518 (FG), 519-520 (FG), 533-534 (FG), 556-557 (FG), and 566-567 (FG). The disordered stretch occupies residues 565–587 (GFGTGGQLLQLKRPPAGNKRGKR).

The protein belongs to the NUP58 family. As to quaternary structure, component of the p62 complex, a complex at least composed of NUP62, NUP54, and NUP58. Interacts with NUTF2. Interacts with SRP1-alpha and Importin p97 proteins when they are together, but not with SRP1-alpha protein alone. In terms of processing, O-glycosylated.

It is found in the nucleus. It localises to the nuclear pore complex. Its subcellular location is the nucleus membrane. Component of the nuclear pore complex, a complex required for the trafficking across the nuclear membrane. This Mus musculus (Mouse) protein is Nucleoporin p58/p45.